The sequence spans 290 residues: Transposon Ty3-G Gag polyprotein (290 aa).

The residue at position 2 (serine 2) is an N-acetylserine. Residues 265–282 (RLCFYCKKEGHRLNECRA) form a CCHC-type zinc finger.

It localises to the cytoplasm. Functionally, capsid protein (CA) is the structural component of the virus-like particle (VLP), forming the shell that encapsulates the retrotransposons dimeric RNA genome. In terms of biological role, nucleocapsid protein p9 (NC) forms the nucleocore that coats the retro-elements dimeric RNA. Binds these RNAs through its zinc fingers. Promotes primer tRNA(i)-Met annealing to the multipartite primer-binding site (PBS), dimerization of Ty3 RNA and initiation of reverse transcription. The polypeptide is Transposon Ty3-G Gag polyprotein (TY3A-G) (Saccharomyces cerevisiae (strain ATCC 204508 / S288c) (Baker's yeast)).